A 443-amino-acid polypeptide reads, in one-letter code: Thymidine phosphorylase (443 aa).

It belongs to the thymidine/pyrimidine-nucleoside phosphorylase family. Homodimer.

The enzyme catalyses thymidine + phosphate = 2-deoxy-alpha-D-ribose 1-phosphate + thymine. Its pathway is pyrimidine metabolism; dTMP biosynthesis via salvage pathway; dTMP from thymine: step 1/2. The enzymes which catalyze the reversible phosphorolysis of pyrimidine nucleosides are involved in the degradation of these compounds and in their utilization as carbon and energy sources, or in the rescue of pyrimidine bases for nucleotide synthesis. The polypeptide is Thymidine phosphorylase (Sodalis glossinidius (strain morsitans)).